The primary structure comprises 892 residues: Iodate reductase subunit IdrA (892 aa).

[3Fe-4S] cluster-binding residues include cysteine 27, cysteine 30, and cysteine 34. A compositionally biased stretch (gly residues) spans arginine 431–alanine 442. The tract at residues arginine 431–glutamate 452 is disordered.

The protein belongs to the prokaryotic molybdopterin-containing oxidoreductase family. As to quaternary structure, the iodate reductase (Idr) complex is composed of a molybdopterin-dependent iodate reductase (IdrA and IdrB subunits) and two associated peroxidases (IdrP1 and IdrP2). [3Fe-4S] cluster serves as cofactor. It depends on Mo-bis(molybdopterin guanine dinucleotide) as a cofactor.

It is found in the periplasm. In terms of biological role, involved in iodate respiration. Probably catalyzes the reduction of iodate (IO(3)(-)) to hypoiodous acid (HIO) and H(2)O(2), using a reduced cytochrome c as the electron donor. This is Iodate reductase subunit IdrA from Pseudomonas sp. (strain SCT).